The chain runs to 469 residues: MTRPVRTRFAPSPTGFIHLGNIRSALYPWAFARKMKGTFVLRIEDTDVERSSQEAVDAILEGMQWLGLDFDEGPIYQMQRMDRYREVLAQMLEKGLAYPCYMSAEELDALRERQREAGLKPRYDGTWRPEPGKVLPEPPAGVKPVLRFRNPLTGTVVWDDAVKGRVEISNEELDDLVIARPDGTPIYNFCVVVDDMDMGITHVIRGDDHVNNTPRQINILNALGGEPPVYAHLPTVLNEQGEKMSKRHGAMSVMAYRDAGFLPEAVVNYLARLGWSHGDAEIFSREQFVEWFDLEHLGKSPAQYDHSKLSWLNAHYIKEADNARLAELAKPFLDALGIDDAAIATGPALDAVVGLMKDRATTVKEIAEGAAMFYRVPAPDADALAQHVTDAVRPALADLAAALKAADWTKEAVSAALKATLATHKLKMPQLAMSVRLLVAGTTHTPSIDAVLVLFGRDVVVTRIEAALA.

Residues 11 to 21 (PSPTGFIHLGN) carry the 'HIGH' region motif. The 'KMSKS' region signature appears at 243 to 247 (KMSKR). K246 serves as a coordination point for ATP.

The protein belongs to the class-I aminoacyl-tRNA synthetase family. Glutamate--tRNA ligase type 1 subfamily. As to quaternary structure, monomer.

It localises to the cytoplasm. The catalysed reaction is tRNA(Glu) + L-glutamate + ATP = L-glutamyl-tRNA(Glu) + AMP + diphosphate. Its function is as follows. Catalyzes the attachment of glutamate to tRNA(Glu) in a two-step reaction: glutamate is first activated by ATP to form Glu-AMP and then transferred to the acceptor end of tRNA(Glu). The sequence is that of Glutamate--tRNA ligase from Burkholderia orbicola (strain AU 1054).